The primary structure comprises 438 residues: uncharacterized protein (438 aa).

Residue Lys-273 is modified to N6-(pyridoxal phosphate)lysine.

Belongs to the class-III pyridoxal-phosphate-dependent aminotransferase family. Requires pyridoxal 5'-phosphate as cofactor.

Its subcellular location is the mitochondrion. This is an uncharacterized protein from Schizosaccharomyces pombe (strain 972 / ATCC 24843) (Fission yeast).